The following is a 579-amino-acid chain: Nuclear hormone receptor family member nhr-47 (579 aa).

Residues 8 to 83 (GTLCAVCDDI…VGMDKNSIQN (76 aa)) constitute a DNA-binding region (nuclear receptor). NR C4-type zinc fingers lie at residues 11–31 (CAVC…CNGC) and 47–71 (CQGN…LQKC). The interval 87–128 (RIGYTKRKRRHDDNDMEGGVHHSEHIRDGSSGSPQMNDESPE) is disordered. Residues 104–114 (GGVHHSEHIRD) show a composition bias toward basic and acidic residues. Residues 164–553 (ADLHSYATLE…SLVKETSLGP (390 aa)) enclose the NR LBD domain.

It belongs to the nuclear hormone receptor family.

It localises to the nucleus. Orphan nuclear receptor. The chain is Nuclear hormone receptor family member nhr-47 (nhr-47) from Caenorhabditis elegans.